We begin with the raw amino-acid sequence, 429 residues long: UDP-N-acetylglucosamine 1-carboxyvinyltransferase (429 aa).

22-23 contributes to the phosphoenolpyruvate binding site; it reads KN. Position 102 (Arg-102) interacts with UDP-N-acetyl-alpha-D-glucosamine. Residue Cys-126 is the Proton donor of the active site. At Cys-126 the chain carries 2-(S-cysteinyl)pyruvic acid O-phosphothioketal. UDP-N-acetyl-alpha-D-glucosamine-binding positions include 131–135, Asp-316, and Ile-338; that span reads RPVDL.

The protein belongs to the EPSP synthase family. MurA subfamily.

It localises to the cytoplasm. The catalysed reaction is phosphoenolpyruvate + UDP-N-acetyl-alpha-D-glucosamine = UDP-N-acetyl-3-O-(1-carboxyvinyl)-alpha-D-glucosamine + phosphate. Its pathway is cell wall biogenesis; peptidoglycan biosynthesis. Its function is as follows. Cell wall formation. Adds enolpyruvyl to UDP-N-acetylglucosamine. This chain is UDP-N-acetylglucosamine 1-carboxyvinyltransferase, found in Methylocella silvestris (strain DSM 15510 / CIP 108128 / LMG 27833 / NCIMB 13906 / BL2).